A 331-amino-acid chain; its full sequence is T-cell acute lymphocytic leukemia protein 1 (331 aa).

The span at 1–22 (MTERPPSEAARSDPQLEGRDAA) shows a compositional bias: basic and acidic residues. Disordered regions lie at residues 1-27 (MTER…ASMA) and 40-86 (ETSR…EARH). Serine 12 is subject to Phosphoserine. Residues 56-70 (ARGGPGGGPAGGGGA) show a composition bias toward gly residues. Residues 72–86 (RDLKGRDAATAEARH) show a composition bias toward basic and acidic residues. Serine 122 and serine 172 each carry phosphoserine. Positions 187 to 239 (VRRIFTNSRERWRQQNVNGAFAELRKLIPTHPPDKKLSKNEILRLAMKYINFL) constitute a bHLH domain. The disordered stretch occupies residues 249-331 (EGTQRAKTGK…LPAADGAGPR (83 aa)). The segment covering 263 to 275 (GAGGGGGGGGGGA) has biased composition (gly residues).

Efficient DNA binding requires dimerization with another bHLH protein. Forms heterodimers with TCF3. Binds to the LIM domain containing protein LMO2 and to DRG1. Can assemble in a complex with LDB1 and LMO2. Component of a TAL-1 complex composed at least of CBFA2T3, LDB1, TAL1 and TCF3. Interacts with SBNO2; this interaction inhibits TAL1 occupancy of the DCSTAMP promoter, leading to the activation of the DCSTAMP promoter by the transcription factor MITF. Phosphorylated on serine residues. Phosphorylation of Ser-122 is strongly stimulated by hypoxia. In terms of processing, ubiquitinated; subsequent to hypoxia-dependent phosphorylation of Ser-122, ubiquitination targets the protein for rapid degradation via the ubiquitin system. This process may be characteristic for microvascular endothelial cells, since it could not be observed in large vessel endothelial cells. Leukemic stem cell.

It is found in the nucleus. Functionally, implicated in the genesis of hemopoietic malignancies. It may play an important role in hemopoietic differentiation. Serves as a positive regulator of erythroid differentiation. The polypeptide is T-cell acute lymphocytic leukemia protein 1 (TAL1) (Homo sapiens (Human)).